The primary structure comprises 501 residues: Cytochrome P450 71B25 (501 aa).

A helical transmembrane segment spans residues 1–21 (MAILQSFLLLLSLPFLFTLIY). Residue C445 coordinates heme.

It belongs to the cytochrome P450 family. The cofactor is heme.

The protein resides in the membrane. The chain is Cytochrome P450 71B25 (CYP71B25) from Arabidopsis thaliana (Mouse-ear cress).